Reading from the N-terminus, the 745-residue chain is Elongation factor G, mitochondrial (745 aa).

In terms of domain architecture, tr-type G spans 40–317; that stretch reads ERIRNIGISA…AVLDYLPNPG (278 aa). GTP contacts are provided by residues 49–56, 116–120, and 170–173; these read AHIDSGKT, DTPGH, and NKLD.

It belongs to the TRAFAC class translation factor GTPase superfamily. Classic translation factor GTPase family. EF-G/EF-2 subfamily.

The protein resides in the mitochondrion. It functions in the pathway protein biosynthesis; polypeptide chain elongation. In terms of biological role, mitochondrial GTPase that catalyzes the GTP-dependent ribosomal translocation step during translation elongation. During this step, the ribosome changes from the pre-translocational (PRE) to the post-translocational (POST) state as the newly formed A-site-bound peptidyl-tRNA and P-site-bound deacylated tRNA move to the P and E sites, respectively. Catalyzes the coordinated movement of the two tRNA molecules, the mRNA and conformational changes in the ribosome. Essential during development as it acts as a retrograde signal from mitochondria to the nucleus to slow down cell proliferation if mitochondrial energy output is low. The sequence is that of Elongation factor G, mitochondrial from Drosophila melanogaster (Fruit fly).